Consider the following 452-residue polypeptide: Phosphoglucosamine mutase (452 aa).

The active-site Phosphoserine intermediate is serine 98. Mg(2+) contacts are provided by serine 98, aspartate 239, aspartate 241, and aspartate 243. Phosphoserine is present on serine 98.

The protein belongs to the phosphohexose mutase family. Requires Mg(2+) as cofactor. Post-translationally, activated by phosphorylation.

It carries out the reaction alpha-D-glucosamine 1-phosphate = D-glucosamine 6-phosphate. In terms of biological role, catalyzes the conversion of glucosamine-6-phosphate to glucosamine-1-phosphate. The polypeptide is Phosphoglucosamine mutase (Anaplasma marginale (strain Florida)).